We begin with the raw amino-acid sequence, 398 residues long: Ornithine aminotransferase (398 aa).

Position 256 is an N6-(pyridoxal phosphate)lysine (Lys256).

This sequence belongs to the class-III pyridoxal-phosphate-dependent aminotransferase family. OAT subfamily. It depends on pyridoxal 5'-phosphate as a cofactor.

It localises to the cytoplasm. The catalysed reaction is a 2-oxocarboxylate + L-ornithine = L-glutamate 5-semialdehyde + an L-alpha-amino acid. It participates in amino-acid biosynthesis; L-proline biosynthesis; L-glutamate 5-semialdehyde from L-ornithine: step 1/1. Functionally, catalyzes the interconversion of ornithine to glutamate semialdehyde. This Oceanobacillus iheyensis (strain DSM 14371 / CIP 107618 / JCM 11309 / KCTC 3954 / HTE831) protein is Ornithine aminotransferase.